The chain runs to 352 residues: DNA polymerase IV (352 aa).

The UmuC domain occupies 4–185 (IIHVDMDCFF…LPLSKIPGVG (182 aa)). Residues Asp8 and Asp103 each contribute to the Mg(2+) site. Glu104 is an active-site residue.

The protein belongs to the DNA polymerase type-Y family. Monomer. Mg(2+) is required as a cofactor.

Its subcellular location is the cytoplasm. It carries out the reaction DNA(n) + a 2'-deoxyribonucleoside 5'-triphosphate = DNA(n+1) + diphosphate. Functionally, poorly processive, error-prone DNA polymerase involved in untargeted mutagenesis. Copies undamaged DNA at stalled replication forks, which arise in vivo from mismatched or misaligned primer ends. These misaligned primers can be extended by PolIV. Exhibits no 3'-5' exonuclease (proofreading) activity. May be involved in translesional synthesis, in conjunction with the beta clamp from PolIII. This chain is DNA polymerase IV, found in Yersinia pestis bv. Antiqua (strain Antiqua).